We begin with the raw amino-acid sequence, 199 residues long: Large ribosomal subunit protein uL13A (199 aa).

S2 carries the post-translational modification N-acetylserine. K177 is covalently cross-linked (Glycyl lysine isopeptide (Lys-Gly) (interchain with G-Cter in ubiquitin)).

Belongs to the universal ribosomal protein uL13 family. In terms of assembly, component of the large ribosomal subunit (LSU). Mature yeast ribosomes consist of a small (40S) and a large (60S) subunit. The 40S small subunit contains 1 molecule of ribosomal RNA (18S rRNA) and 33 different proteins (encoded by 57 genes). The large 60S subunit contains 3 rRNA molecules (25S, 5.8S and 5S rRNA) and 46 different proteins (encoded by 81 genes). N-terminally acetylated by acetyltransferase NatA.

It is found in the cytoplasm. Functionally, component of the ribosome, a large ribonucleoprotein complex responsible for the synthesis of proteins in the cell. The small ribosomal subunit (SSU) binds messenger RNAs (mRNAs) and translates the encoded message by selecting cognate aminoacyl-transfer RNA (tRNA) molecules. The large subunit (LSU) contains the ribosomal catalytic site termed the peptidyl transferase center (PTC), which catalyzes the formation of peptide bonds, thereby polymerizing the amino acids delivered by tRNAs into a polypeptide chain. The nascent polypeptides leave the ribosome through a tunnel in the LSU and interact with protein factors that function in enzymatic processing, targeting, and the membrane insertion of nascent chains at the exit of the ribosomal tunnel. The chain is Large ribosomal subunit protein uL13A from Saccharomyces cerevisiae (strain ATCC 204508 / S288c) (Baker's yeast).